An 89-amino-acid polypeptide reads, in one-letter code: Small ribosomal subunit protein uS15 (89 aa).

The segment covering 1 to 11 (MSITAERKAEV) has biased composition (basic and acidic residues). The disordered stretch occupies residues 1–24 (MSITAERKAEVIKTSATKAGDTGS).

This sequence belongs to the universal ribosomal protein uS15 family. As to quaternary structure, part of the 30S ribosomal subunit. Forms a bridge to the 50S subunit in the 70S ribosome, contacting the 23S rRNA.

In terms of biological role, one of the primary rRNA binding proteins, it binds directly to 16S rRNA where it helps nucleate assembly of the platform of the 30S subunit by binding and bridging several RNA helices of the 16S rRNA. Forms an intersubunit bridge (bridge B4) with the 23S rRNA of the 50S subunit in the ribosome. This Rhodopseudomonas palustris (strain TIE-1) protein is Small ribosomal subunit protein uS15.